The sequence spans 205 residues: Syndecan 4-B (205 aa).

The first 17 residues, 1–17 (MNRLLLLLALVLSGVAA), serve as a signal peptide directing secretion. Topologically, residues 18–162 (ESIRETETMD…FFQRTEVIVA (145 aa)) are extracellular. Residues 26-113 (MDPTSMLEYE…HDFDETKTGR (88 aa)) form a disordered region. O-linked (Xyl...) (glycosaminoglycan) serine glycans are attached at residues Ser37, Ser73, and Ser75. A compositionally biased stretch (acidic residues) spans 44-94 (VFVDEDDDDDYEDGVDYEIDSESDNDEDYSGSGDDDFDDEDNVEDEDEEET). Residues 102–113 (PEHDFDETKTGR) show a composition bias toward basic and acidic residues. A helical membrane pass occupies residues 163 to 183 (IIAGTLVGLVVAVSFIVFLVI). The Cytoplasmic segment spans residues 184–205 (RRNQNGDLVKKPIYKKTSTMEV).

It belongs to the syndecan proteoglycan family. Interacts with the Wnt receptor fzd7 and its signal transducer dvl2/dsh. O-glycosylated; contains both chondroitin sulfate and heparan sulfate. Ser-37, Ser-73 and Ser-75 can all be modified by either chondroitin sulfate or heparan sulfate, and the protein exists in forms that contain only chondroitin sulfate, only heparan sulfate and both chondroitin sulfate and heparan sulfate. As to expression, expressed in the animal hemisphere from the 4-cell to the blastula stage. During gastrulation, expressed in the involuting dorsal mesoderm and ectoderm. After involution, localized mainly to the anterior neuroectoderm. At later stages, expressed in the brain, branchial arches, pronephros, tailbud, and at low levels in the somites.

The protein localises to the membrane. In terms of biological role, cell surface proteoglycan. Regulates non-canonical Wnt signaling, being necessary and sufficient for fibronectrin-mediated translocation of dvl2/dsh to the plasma membrane. Required for proper convergent extension movements during gastrulation, which shape the neural plate, and for subsequent neural tube closure. The sequence is that of Syndecan 4-B (sdc4-b) from Xenopus laevis (African clawed frog).